A 402-amino-acid polypeptide reads, in one-letter code: S-adenosylmethionine synthase (402 aa).

137–142 lines the ATP pocket; the sequence is GQGSAD.

It belongs to the AdoMet synthase 2 family. Mg(2+) is required as a cofactor.

The catalysed reaction is L-methionine + ATP + H2O = S-adenosyl-L-methionine + phosphate + diphosphate. It participates in amino-acid biosynthesis; S-adenosyl-L-methionine biosynthesis; S-adenosyl-L-methionine from L-methionine: step 1/1. In terms of biological role, catalyzes the formation of S-adenosylmethionine from methionine and ATP. This is S-adenosylmethionine synthase from Pyrobaculum islandicum (strain DSM 4184 / JCM 9189 / GEO3).